The following is a 161-amino-acid chain: Transcription initiation factor TFIID subunit 12 (161 aa).

The interval 15 to 55 (FSSIKPEPASTPPQGSMANSTAVVKIPGTPGAGGRLSPENN) is disordered. Residue Lys-19 forms a Glycyl lysine isopeptide (Lys-Gly) (interchain with G-Cter in SUMO2) linkage. Positions 26-36 (PPQGSMANSTA) are enriched in polar residues. Thr-43 carries the phosphothreonine modification. Phosphoserine is present on Ser-51. Residue Thr-59 is modified to Phosphothreonine. Residues 59 to 126 (TKKKLQDLVR…QLHLERQWNM (68 aa)) form the Histone-fold domain.

The protein belongs to the TAF12 family. Component of the TFIID basal transcription factor complex, composed of TATA-box-binding protein TBP, and a number of TBP-associated factors (TAFs), including TAF1, TAF2, TAF3, TAF4, TAF5, TAF6, TAF7, TAF8, TAF9, TAF10, TAF11, TAF12 and TAF13. Component of the TATA-binding protein-free TAF complex (TFTC), the PCAF histone acetylase complex and the STAGA transcription coactivator-HAT complex. Component of the PCAF complex, at least composed of TADA2L/ADA2, TADA3L/ADA3, TAF5L/PAF65-beta, SUPT3H, TAF6L, TAF9, TAF10, TAF12 and TRRAP. Component of the STAGA transcription coactivator-HAT complex, at least composed of SUPT3H, GCN5L2, TAF5L, TAF6L, STAF65-gamma/SUPT7L, TADA3L, TAD1L, TAF10, TAF12, TRRAP and TAF9. Interacts with ATF7 (via the transactivation domain); the interaction is prevented by sumoylation of ATF7. As to quaternary structure, interacts with TBP; the interaction is direct. Interacts with TAF10; the interaction is direct. Interacts with ATF7, promoting transactivation by ATF7. In terms of assembly, does not promote the transactivation of ATF7. In terms of tissue distribution, ubiquitous.

Its subcellular location is the nucleus. Its function is as follows. The TFIID basal transcription factor complex plays a major role in the initiation of RNA polymerase II (Pol II)-dependent transcription. TFIID recognizes and binds promoters with or without a TATA box via its subunit TBP, a TATA-box-binding protein, and promotes assembly of the pre-initiation complex (PIC). The TFIID complex consists of TBP and TBP-associated factors (TAFs), including TAF1, TAF2, TAF3, TAF4, TAF5, TAF6, TAF7, TAF8, TAF9, TAF10, TAF11, TAF12 and TAF13. Component of the TATA-binding protein-free TAF complex (TFTC), the PCAF histone acetylase complex and the STAGA transcription coactivator-HAT complex. The polypeptide is Transcription initiation factor TFIID subunit 12 (Homo sapiens (Human)).